The chain runs to 476 residues: Protein DETOXIFICATION 17 (476 aa).

12 helical membrane-spanning segments follow: residues 29 to 51 (LWLSAPLIGVSLLQYSLQVISVM), 70 to 90 (FASVTGFTFLLGTASALETLC), 111 to 131 (FVLLILSVPLSIIWANTEQIL), 140 to 160 (IASVAGSYAKYMIPSLFAYGL), 177 to 197 (VFVCSGITTCLHLLLCWLFVL), 205 to 225 (GAALAISVSYWFNVILLSCYV), 252 to 272 (IAFPSAVMVCLELWSFELLVL), 286 to 306 (VLSICLNTSLTIWQISVGLGG), 326 to 346 (LAVYVIVGIAVAEGIVVVTVL), 363 to 383 (IIAYAASMIPIVACGNFLDGL), 405 to 425 (LGSYYLVGVPLGLLLGFHFHI), and 431 to 451 (WLGIVTALSVQVLCLSLVTIF).

The protein belongs to the multi antimicrobial extrusion (MATE) (TC 2.A.66.1) family.

The protein localises to the membrane. The sequence is that of Protein DETOXIFICATION 17 from Arabidopsis thaliana (Mouse-ear cress).